The sequence spans 155 residues: Regulatory protein RecX (155 aa).

This sequence belongs to the RecX family.

It localises to the cytoplasm. Functionally, modulates RecA activity. This chain is Regulatory protein RecX, found in Vibrio campbellii (strain ATCC BAA-1116).